Reading from the N-terminus, the 496-residue chain is Transcription factor CP2 (496 aa).

Residues 61–300 enclose the Grh/CP2 DB domain; that stretch reads ENKILPFQYV…SPGFNSSHSS (240 aa). Residues 133–386 are DNA-binding; it reads EHQQLEGWRW…LFNALKGRMV (254 aa). Disordered regions lie at residues 238–268 and 296–327; these read FKPK…YQPS and SSHS…LLPT. Residues 241–265 show a composition bias toward basic and acidic residues; sequence KGADRKQKTDREKMEKRTPHEKEKY.

The protein belongs to the grh/CP2 family. CP2 subfamily. As to quaternary structure, component of the SSP (stage selector protein) complex, which appears to be a heteromer of TFCP2 and 2 copies of NFE4. As to expression, expressed in the epiblast at the pre-primitive streak stage. At the primitive streak stage, expressed in the extending primitive streak and in the prospective neural plate. At stages 7 and 8, expressed in the neural folds, somites and in the regressing primitive streak. At stage 12, ubiquitously expressed in the whole embryo.

The protein localises to the nucleus. Binds the B-response element 5'-CAAGTCCAGGCAAGT-3' of the ENS1/ERNI promoter. May be the major transcription activator thus being essential for its expression. The sequence is that of Transcription factor CP2 (TFCP2) from Gallus gallus (Chicken).